The chain runs to 41 residues: Pi-stichotoxin-Hcr5c (41 aa).

3 cysteine pairs are disulfide-bonded: C4–C37, C6–C30, and C20–C38.

This sequence belongs to the sea anemone type 3 (BDS) potassium channel toxin family.

It localises to the secreted. The protein resides in the nematocyst. Functionally, weakly and reversibly inhibits rat homomeric ASIC1 (isoform ASIC1a) (IC(50)=4.95 uM), and ASIC3 (IC(50)=17 uM). ASIC1a current inhibition and ASIC3 transient current inhibition are not complete, and reach a maximum of 70% inhibition and 80%, respectively. The protein is Pi-stichotoxin-Hcr5c of Radianthus crispa (Leathery sea anemone).